A 518-amino-acid chain; its full sequence is 3-octaprenyl-4-hydroxybenzoate carboxy-lyase (518 aa).

Asn-177 contacts Mn(2+). Prenylated FMN is bound by residues 180-182, 194-196, and 199-200; these read IYR, RWL, and RG. Residue Glu-243 participates in Mn(2+) binding. The Proton donor role is filled by Asp-318.

This sequence belongs to the UbiD family. In terms of assembly, homohexamer. The cofactor is prenylated FMN. Requires Mn(2+) as cofactor.

The protein resides in the cell membrane. The catalysed reaction is a 4-hydroxy-3-(all-trans-polyprenyl)benzoate + H(+) = a 2-(all-trans-polyprenyl)phenol + CO2. Its pathway is cofactor biosynthesis; ubiquinone biosynthesis. Functionally, catalyzes the decarboxylation of 3-octaprenyl-4-hydroxy benzoate to 2-octaprenylphenol, an intermediate step in ubiquinone biosynthesis. This chain is 3-octaprenyl-4-hydroxybenzoate carboxy-lyase, found in Burkholderia lata (strain ATCC 17760 / DSM 23089 / LMG 22485 / NCIMB 9086 / R18194 / 383).